The chain runs to 147 residues: MVHWSAEEKQLITGLWGKVNVEECGAEALARLLIVYPWTQRFFSSFGNLSSPTAIIGNPKVPPHGRKFFTSFGEPVKNLDNIKNTYAKLSELHCEKLQVEPENFRLLGDILIIVLASHFARDFTPACQFPWQKLVSVVAHALPRKYH.

Residues 3–147 (HWSAEEKQLI…VAHALPRKYH (145 aa)) form the Globin domain. Heme b-binding residues include H64 and H93.

It belongs to the globin family. As to quaternary structure, heterotetramer of two epsilon chains and two alpha chains. In terms of tissue distribution, red blood cells.

Beta-type chain found in early embryos. This is Hemoglobin subunit epsilon (HBE) from Cairina moschata (Muscovy duck).